The primary structure comprises 294 residues: Acetyl-coenzyme A carboxylase carboxyl transferase subunit beta (294 aa).

The CoA carboxyltransferase N-terminal domain occupies 30 to 294; the sequence is IMTKCPECKK…PGVGGEVDGE (265 aa). Positions 34, 37, 53, and 56 each coordinate Zn(2+). The segment at 34–56 adopts a C4-type zinc-finger fold; that stretch reads CPECKKIMYTKELQKNLMVCNYC.

Belongs to the AccD/PCCB family. Acetyl-CoA carboxylase is a heterohexamer composed of biotin carboxyl carrier protein (AccB), biotin carboxylase (AccC) and two subunits each of ACCase subunit alpha (AccA) and ACCase subunit beta (AccD). Requires Zn(2+) as cofactor.

Its subcellular location is the cytoplasm. The enzyme catalyses N(6)-carboxybiotinyl-L-lysyl-[protein] + acetyl-CoA = N(6)-biotinyl-L-lysyl-[protein] + malonyl-CoA. Its pathway is lipid metabolism; malonyl-CoA biosynthesis; malonyl-CoA from acetyl-CoA: step 1/1. In terms of biological role, component of the acetyl coenzyme A carboxylase (ACC) complex. Biotin carboxylase (BC) catalyzes the carboxylation of biotin on its carrier protein (BCCP) and then the CO(2) group is transferred by the transcarboxylase to acetyl-CoA to form malonyl-CoA. This Listeria monocytogenes serovar 1/2a (strain ATCC BAA-679 / EGD-e) protein is Acetyl-coenzyme A carboxylase carboxyl transferase subunit beta.